Reading from the N-terminus, the 348-residue chain is Dihydroorotase (348 aa).

Residues His-14 and His-16 each contribute to the Zn(2+) site. Substrate is bound by residues 16-18 (HLR) and Asn-42. Zn(2+) contacts are provided by Lys-100, His-137, and His-175. Lys-100 carries the post-translational modification N6-carboxylysine. Position 137 (His-137) interacts with substrate. Leu-220 serves as a coordination point for substrate. Asp-248 provides a ligand contact to Zn(2+). Residue Asp-248 is part of the active site. Substrate is bound by residues His-252 and Ala-264.

It belongs to the metallo-dependent hydrolases superfamily. DHOase family. Class II DHOase subfamily. In terms of assembly, homodimer. It depends on Zn(2+) as a cofactor.

The enzyme catalyses (S)-dihydroorotate + H2O = N-carbamoyl-L-aspartate + H(+). The protein operates within pyrimidine metabolism; UMP biosynthesis via de novo pathway; (S)-dihydroorotate from bicarbonate: step 3/3. In terms of biological role, catalyzes the reversible cyclization of carbamoyl aspartate to dihydroorotate. This chain is Dihydroorotase, found in Pseudomonas fluorescens (strain SBW25).